The chain runs to 80 residues: Putative antitoxin VapB44 (80 aa).

Residues 40–68 (NQNPQPAASQEDAFHGFEPLPHRGGAVSN) are disordered.

In terms of biological role, possibly the antitoxin component of a type II toxin-antitoxin (TA) system. Its cognate toxin is VapC44 (Potential). This Mycobacterium tuberculosis (strain CDC 1551 / Oshkosh) protein is Putative antitoxin VapB44 (vapB44).